Consider the following 184-residue polypeptide: dCTP deaminase (184 aa).

107 to 112 (KSTYAR) contacts dCTP. Glu-133 (proton donor/acceptor) is an active-site residue. 3 residues coordinate dCTP: Gln-152, Tyr-166, and Gln-176.

It belongs to the dCTP deaminase family. In terms of assembly, homotrimer.

The catalysed reaction is dCTP + H2O + H(+) = dUTP + NH4(+). It participates in pyrimidine metabolism; dUMP biosynthesis; dUMP from dCTP (dUTP route): step 1/2. Functionally, catalyzes the deamination of dCTP to dUTP. The polypeptide is dCTP deaminase (Acidiphilium cryptum (strain JF-5)).